A 280-amino-acid chain; its full sequence is Large ribosomal subunit protein uL2 (280 aa).

Disordered stretches follow at residues 29–58 (PEKS…GGGH) and 225–280 (VMNP…NKKR). The span at 45–58 (SHGHITTRHRGGGH) shows a compositional bias: basic residues. The span at 253 to 269 (KEGRTRKPKRYSDDMIV) shows a compositional bias: basic and acidic residues. The segment covering 270-280 (RRRRANKNKKR) has biased composition (basic residues).

It belongs to the universal ribosomal protein uL2 family. In terms of assembly, part of the 50S ribosomal subunit. Forms a bridge to the 30S subunit in the 70S ribosome.

Functionally, one of the primary rRNA binding proteins. Required for association of the 30S and 50S subunits to form the 70S ribosome, for tRNA binding and peptide bond formation. It has been suggested to have peptidyltransferase activity; this is somewhat controversial. Makes several contacts with the 16S rRNA in the 70S ribosome. The chain is Large ribosomal subunit protein uL2 from Corynebacterium glutamicum (strain R).